Here is a 439-residue protein sequence, read N- to C-terminus: Uracil-regulated protein 1 (439 aa).

Residues 1–24 are disordered; it reads MLATEQSRPAECNGAHAHEKTEEV. 268–272 contributes to the GTP binding site; the sequence is RVHDE. 3 residues coordinate Zn(2+): cysteine 273, cysteine 284, and cysteine 286. 315 to 317 contacts GTP; it reads EGR. Residue aspartate 353 is the Proton acceptor of the active site. Arginine 355 serves as the catalytic Nucleophile. The GTP site is built by serine 377 and lysine 382.

It belongs to the GTP cyclohydrolase II family.

The protein resides in the cytoplasm. It is found in the nucleus. This Schizosaccharomyces pombe (strain 972 / ATCC 24843) (Fission yeast) protein is Uracil-regulated protein 1 (urg1).